The chain runs to 771 residues: U-box domain-containing protein 6 (771 aa).

The U-box domain maps to 274 to 348 (IPPEELRCPI…ASWCEQNGIT (75 aa)). A disordered region spans residues 394-415 (EESSTIESERQQKEKNNAPDEV). Basic and acidic residues predominate over residues 400–411 (ESERQQKEKNNA). ARM repeat units lie at residues 456–499 (EEAR…NLAV), 502–542 (NRNK…CLEK), 544–581 (KPVI…NLST), 583–622 (SPNI…NLAS), and 625–664 (EGKE…ILCT). Basic and acidic residues predominate over residues 706–722 (EQRHRDQPSPNKEEAPR). Residues 706-751 (EQRHRDQPSPNKEEAPRKTVSAPMAIPAPVSAPESEVKPLTKSISR) form a disordered region.

The catalysed reaction is S-ubiquitinyl-[E2 ubiquitin-conjugating enzyme]-L-cysteine + [acceptor protein]-L-lysine = [E2 ubiquitin-conjugating enzyme]-L-cysteine + N(6)-ubiquitinyl-[acceptor protein]-L-lysine.. The protein operates within protein modification; protein ubiquitination. Functionally, functions as an E3 ubiquitin ligase. This Arabidopsis thaliana (Mouse-ear cress) protein is U-box domain-containing protein 6 (PUB6).